A 485-amino-acid polypeptide reads, in one-letter code: Glutamate--tRNA ligase (485 aa).

Positions 11-21 (PSPTGYMHVGN) match the 'HIGH' region motif. Zn(2+) is bound by residues cysteine 108, cysteine 110, cysteine 135, and aspartate 137. Positions 252 to 256 (KLSKR) match the 'KMSKS' region motif. Lysine 255 is a binding site for ATP.

This sequence belongs to the class-I aminoacyl-tRNA synthetase family. Glutamate--tRNA ligase type 1 subfamily. In terms of assembly, monomer. Zn(2+) is required as a cofactor.

It is found in the cytoplasm. It carries out the reaction tRNA(Glu) + L-glutamate + ATP = L-glutamyl-tRNA(Glu) + AMP + diphosphate. In terms of biological role, catalyzes the attachment of glutamate to tRNA(Glu) in a two-step reaction: glutamate is first activated by ATP to form Glu-AMP and then transferred to the acceptor end of tRNA(Glu). In Clostridium botulinum (strain Loch Maree / Type A3), this protein is Glutamate--tRNA ligase.